The primary structure comprises 268 residues: Ribosomal RNA small subunit methyltransferase A (268 aa).

Positions 16, 18, 43, 64, 89, and 110 each coordinate S-adenosyl-L-methionine.

The protein belongs to the class I-like SAM-binding methyltransferase superfamily. rRNA adenine N(6)-methyltransferase family. RsmA subfamily.

The protein localises to the cytoplasm. It catalyses the reaction adenosine(1518)/adenosine(1519) in 16S rRNA + 4 S-adenosyl-L-methionine = N(6)-dimethyladenosine(1518)/N(6)-dimethyladenosine(1519) in 16S rRNA + 4 S-adenosyl-L-homocysteine + 4 H(+). Specifically dimethylates two adjacent adenosines (A1518 and A1519) in the loop of a conserved hairpin near the 3'-end of 16S rRNA in the 30S particle. May play a critical role in biogenesis of 30S subunits. The protein is Ribosomal RNA small subunit methyltransferase A of Pseudomonas syringae pv. syringae (strain B728a).